The primary structure comprises 1116 residues: Auxin response factor 21 (1116 aa).

Residues 132–234 constitute a DNA-binding region (TF-B3); sequence FCKTLTASDT…QLLLGIRRAN (103 aa). The segment at 763 to 812 is disordered; that stretch reads KTDDVPSTSTSPSTNSNPVLLQSIPSSSKNQSLTTAGKTSQSSVVLGPTI. A compositionally biased stretch (low complexity) spans 768–780; it reads PSTSTSPSTNSNP. Over residues 781 to 806 the composition is skewed to polar residues; that stretch reads VLLQSIPSSSKNQSLTTAGKTSQSSV. Positions 998–1082 constitute a PB1 domain; sequence RTYTKVHKRG…RCIRILSPQE (85 aa).

Belongs to the ARF family. Homodimers and heterodimers. In terms of tissue distribution, expressed in roots, culms, leaves and young panicles.

Its subcellular location is the nucleus. In terms of biological role, auxin response factors (ARFs) are transcriptional factors that bind specifically to the DNA sequence 5'-TGTCTC-3' found in the auxin-responsive promoter elements (AuxREs). This Oryza sativa subsp. japonica (Rice) protein is Auxin response factor 21 (ARF21).